The following is a 317-amino-acid chain: Probable cell division protein WhiA (317 aa).

Residues 281-314 constitute a DNA-binding region (H-T-H motif); it reads TLKELGEMINPPIGKSGVNHRLRKLDQIADRERG.

This sequence belongs to the WhiA family.

Functionally, involved in cell division and chromosome segregation. The polypeptide is Probable cell division protein WhiA (Alkaliphilus metalliredigens (strain QYMF)).